The sequence spans 499 residues: Xylulose kinase (499 aa).

A substrate-binding site is contributed by Met81–His82. Asp239 functions as the Proton acceptor in the catalytic mechanism.

It belongs to the FGGY kinase family.

It catalyses the reaction D-xylulose + ATP = D-xylulose 5-phosphate + ADP + H(+). In terms of biological role, catalyzes the phosphorylation of D-xylulose to D-xylulose 5-phosphate. The protein is Xylulose kinase of Bacillus subtilis (strain 168).